Reading from the N-terminus, the 72-residue chain is Translation initiation factor IF-1 (72 aa).

In terms of domain architecture, S1-like spans 1–72 (MSKDDCIEFE…TKGRIIYRMK (72 aa)).

It belongs to the IF-1 family. As to quaternary structure, component of the 30S ribosomal translation pre-initiation complex which assembles on the 30S ribosome in the order IF-2 and IF-3, IF-1 and N-formylmethionyl-tRNA(fMet); mRNA recruitment can occur at any time during PIC assembly.

It localises to the cytoplasm. One of the essential components for the initiation of protein synthesis. Stabilizes the binding of IF-2 and IF-3 on the 30S subunit to which N-formylmethionyl-tRNA(fMet) subsequently binds. Helps modulate mRNA selection, yielding the 30S pre-initiation complex (PIC). Upon addition of the 50S ribosomal subunit IF-1, IF-2 and IF-3 are released leaving the mature 70S translation initiation complex. The protein is Translation initiation factor IF-1 of Xylella fastidiosa (strain 9a5c).